Reading from the N-terminus, the 264-residue chain is Tryptophan synthase alpha chain (264 aa).

Residues E49 and D60 each act as proton acceptor in the active site.

Belongs to the TrpA family. As to quaternary structure, tetramer of two alpha and two beta chains.

The enzyme catalyses (1S,2R)-1-C-(indol-3-yl)glycerol 3-phosphate + L-serine = D-glyceraldehyde 3-phosphate + L-tryptophan + H2O. It participates in amino-acid biosynthesis; L-tryptophan biosynthesis; L-tryptophan from chorismate: step 5/5. Its function is as follows. The alpha subunit is responsible for the aldol cleavage of indoleglycerol phosphate to indole and glyceraldehyde 3-phosphate. This Laribacter hongkongensis (strain HLHK9) protein is Tryptophan synthase alpha chain.